A 797-amino-acid polypeptide reads, in one-letter code: G-patch domain-containing protein C1486.03 (797 aa).

Residues 1–12 (MQNEYVDMNSSS) show a composition bias toward polar residues. 2 disordered regions span residues 1–33 (MQNE…FRGQ) and 159–204 (VRER…SSEE). The G-patch domain occupies 115 to 161 (TTGFGAKMLEKMGYKQGQGLGANAEGIAEPVQSKLRPERVGLGAVRE). The segment covering 159-185 (VRERTEKQRKEAIARGEISDSEDEKHT) has biased composition (basic and acidic residues). The span at 186–199 (VKQKPLREKKKKPL) shows a compositional bias: basic residues.

It belongs to the TFP11/STIP family.

It localises to the cytoplasm. The protein resides in the cytoskeleton. Its subcellular location is the microtubule organizing center. The protein localises to the spindle pole body. This chain is G-patch domain-containing protein C1486.03, found in Schizosaccharomyces pombe (strain 972 / ATCC 24843) (Fission yeast).